The primary structure comprises 732 residues: uncharacterized protein (732 aa).

2 disordered regions span residues 38–90 and 226–629; these read TTLA…NNNK and EESP…MDYQ. Low complexity predominate over residues 47-56; sequence QQQQQQQQQQ. Residues 57-76 are compositionally biased toward polar residues; sequence PPSSSTTKEGGATTTQDNKL. Composition is skewed to low complexity over residues 77–89, 231–247, and 254–318; these read TANG…NNNN, TTTT…TTAA, and TTTT…GTNS. The segment covering 327–338 has biased composition (basic residues); that stretch reads KAKKGVPKKAPT. Composition is skewed to low complexity over residues 339 to 383, 401 to 421, and 487 to 523; these read KKQP…APKT, KTSK…STTK, and SAST…IKSK. The span at 553–566 shows a compositional bias: acidic residues; sequence AAAEEQEEEEEEDN. 2 stretches are compositionally biased toward low complexity: residues 567–577 and 593–609; these read SNGIQNNNSSN and DNFS…NGLL. The segment covering 610–621 has biased composition (acidic residues); it reads SEDDDDDDDDDN.

This is an uncharacterized protein from Dictyostelium discoideum (Social amoeba).